Consider the following 639-residue polypeptide: Chaperone protein DnaK (639 aa).

The residue at position 198 (T198) is a Phosphothreonine; by autocatalysis. The segment at 597 to 639 (AYSAGQSAEGAPHAAGAEASAQSRTDDGVVDADFEEVDEKKGH) is disordered. A compositionally biased stretch (low complexity) spans 603–617 (SAEGAPHAAGAEASA). Acidic residues predominate over residues 624–633 (GVVDADFEEV).

This sequence belongs to the heat shock protein 70 family.

Its function is as follows. Acts as a chaperone. In Rhodospirillum rubrum (strain ATCC 11170 / ATH 1.1.1 / DSM 467 / LMG 4362 / NCIMB 8255 / S1), this protein is Chaperone protein DnaK.